The chain runs to 249 residues: Probable phosphatase Shal_1519 (249 aa).

His-8, His-10, His-16, His-41, Glu-74, His-102, His-132, Asp-193, and His-195 together coordinate Zn(2+).

This sequence belongs to the PHP family. It depends on Zn(2+) as a cofactor.

This Shewanella halifaxensis (strain HAW-EB4) protein is Probable phosphatase Shal_1519.